A 282-amino-acid polypeptide reads, in one-letter code: Bis(5'-nucleosyl)-tetraphosphatase, symmetrical (282 aa).

The protein belongs to the Ap4A hydrolase family. Monomer.

It carries out the reaction P(1),P(4)-bis(5'-adenosyl) tetraphosphate + H2O = 2 ADP + 2 H(+). In terms of biological role, hydrolyzes diadenosine 5',5'''-P1,P4-tetraphosphate to yield ADP. This chain is Bis(5'-nucleosyl)-tetraphosphatase, symmetrical, found in Escherichia coli O157:H7.